We begin with the raw amino-acid sequence, 265 residues long: Osteoclast-associated immunoglobulin-like receptor (265 aa).

The signal sequence occupies residues 1-18 (MVLSLILQLSTLWPACRA). The Extracellular portion of the chain corresponds to 19-231 (DFTPTAPLAS…LDYTQGNLIR (213 aa)). 2 Ig-like domains span residues 22 to 115 (PTAP…SQPS) and 125 to 218 (QLPR…SFEG). A glycan (N-linked (GlcNAc...) asparagine) is linked at N47. Residues C52 and C99 are joined by a disulfide bond. N144 is a glycosylation site (N-linked (GlcNAc...) asparagine). A helical transmembrane segment spans residues 232–248 (LGLAGMVLICLGIIVTC). Over 249-265 (DWHSRSSAFDGLLPQQN) the chain is Cytoplasmic.

The protein belongs to the leukocyte receptor complex/polymeric immunoglobulin receptor (PIR/LRC) family. As to expression, specifically expressed in preosteoclasts or mature osteoclasts.

It localises to the cell membrane. In terms of biological role, regulator of osteoclastogenesis which plays an important bone-specific function in osteoclast differentiation. This is Osteoclast-associated immunoglobulin-like receptor (Oscar) from Mus musculus (Mouse).